Consider the following 401-residue polypeptide: Probable tRNA sulfurtransferase (401 aa).

Residues Glu60–Asp165 form the THUMP domain. ATP-binding positions include Met183–Leu184, His208–Phe209, Arg265, Gly287, and Gln296.

This sequence belongs to the ThiI family.

The protein resides in the cytoplasm. The enzyme catalyses [ThiI sulfur-carrier protein]-S-sulfanyl-L-cysteine + a uridine in tRNA + 2 reduced [2Fe-2S]-[ferredoxin] + ATP + H(+) = [ThiI sulfur-carrier protein]-L-cysteine + a 4-thiouridine in tRNA + 2 oxidized [2Fe-2S]-[ferredoxin] + AMP + diphosphate. The catalysed reaction is [ThiS sulfur-carrier protein]-C-terminal Gly-Gly-AMP + S-sulfanyl-L-cysteinyl-[cysteine desulfurase] + AH2 = [ThiS sulfur-carrier protein]-C-terminal-Gly-aminoethanethioate + L-cysteinyl-[cysteine desulfurase] + A + AMP + 2 H(+). The protein operates within cofactor biosynthesis; thiamine diphosphate biosynthesis. Catalyzes the ATP-dependent transfer of a sulfur to tRNA to produce 4-thiouridine in position 8 of tRNAs, which functions as a near-UV photosensor. Also catalyzes the transfer of sulfur to the sulfur carrier protein ThiS, forming ThiS-thiocarboxylate. This is a step in the synthesis of thiazole, in the thiamine biosynthesis pathway. The sulfur is donated as persulfide by IscS. This chain is Probable tRNA sulfurtransferase, found in Bacillus subtilis (strain 168).